The chain runs to 72 residues: Translation initiation factor IF-1 (72 aa).

The 72-residue stretch at 1 to 72 folds into the S1-like domain; the sequence is MAKEDVIEIE…TRGRITYRFK (72 aa).

The protein belongs to the IF-1 family. As to quaternary structure, component of the 30S ribosomal translation pre-initiation complex which assembles on the 30S ribosome in the order IF-2 and IF-3, IF-1 and N-formylmethionyl-tRNA(fMet); mRNA recruitment can occur at any time during PIC assembly.

It localises to the cytoplasm. One of the essential components for the initiation of protein synthesis. Stabilizes the binding of IF-2 and IF-3 on the 30S subunit to which N-formylmethionyl-tRNA(fMet) subsequently binds. Helps modulate mRNA selection, yielding the 30S pre-initiation complex (PIC). Upon addition of the 50S ribosomal subunit IF-1, IF-2 and IF-3 are released leaving the mature 70S translation initiation complex. The protein is Translation initiation factor IF-1 of Streptococcus mutans serotype c (strain ATCC 700610 / UA159).